Reading from the N-terminus, the 537-residue chain is uncharacterized protein (537 aa).

The next 6 membrane-spanning stretches (helical) occupy residues 5–25, 40–60, 63–83, 115–135, 149–169, and 197–217; these read IGLG…PWFV, LAVA…FFGW, VLWV…MAVV, GLYY…HLEG, VYLL…WVTL, and VGIV…ALVI.

The protein resides in the plastid. It is found in the chloroplast membrane. This is an uncharacterized protein from Ostreococcus tauri.